Reading from the N-terminus, the 297-residue chain is tRNA pseudouridine synthase B (297 aa).

The Nucleophile role is filled by D39.

Belongs to the pseudouridine synthase TruB family. Type 1 subfamily.

The enzyme catalyses uridine(55) in tRNA = pseudouridine(55) in tRNA. Functionally, responsible for synthesis of pseudouridine from uracil-55 in the psi GC loop of transfer RNAs. The polypeptide is tRNA pseudouridine synthase B (Lactobacillus johnsonii (strain CNCM I-12250 / La1 / NCC 533)).